The chain runs to 160 residues: Transcription elongation factor GreA (160 aa).

Residues 14 to 38 (IKAELASLKKERPEVIKAIAEAREE) are a coiled coil.

It belongs to the GreA/GreB family.

Necessary for efficient RNA polymerase transcription elongation past template-encoded arresting sites. The arresting sites in DNA have the property of trapping a certain fraction of elongating RNA polymerases that pass through, resulting in locked ternary complexes. Cleavage of the nascent transcript by cleavage factors such as GreA or GreB allows the resumption of elongation from the new 3'terminus. GreA releases sequences of 2 to 3 nucleotides. In Maridesulfovibrio salexigens (strain ATCC 14822 / DSM 2638 / NCIMB 8403 / VKM B-1763) (Desulfovibrio salexigens), this protein is Transcription elongation factor GreA.